The chain runs to 156 residues: Small ribosomal subunit protein uS7 (156 aa).

This sequence belongs to the universal ribosomal protein uS7 family. As to quaternary structure, part of the 30S ribosomal subunit. Contacts proteins S9 and S11.

Its function is as follows. One of the primary rRNA binding proteins, it binds directly to 16S rRNA where it nucleates assembly of the head domain of the 30S subunit. Is located at the subunit interface close to the decoding center, probably blocks exit of the E-site tRNA. The polypeptide is Small ribosomal subunit protein uS7 (Tremblaya princeps).